Reading from the N-terminus, the 224-residue chain is Orotate phosphoribosyltransferase (224 aa).

K29 provides a ligand contact to 5-phospho-alpha-D-ribose 1-diphosphate. Orotate is bound at residue 37-38 (FF). 5-phospho-alpha-D-ribose 1-diphosphate contacts are provided by residues 75–76 (YK), R105, K106, K109, H111, and 130–138 (DDVITAGTS). Orotate is bound by residues T134 and R162.

Belongs to the purine/pyrimidine phosphoribosyltransferase family. PyrE subfamily. Homodimer. Mg(2+) serves as cofactor.

The enzyme catalyses orotidine 5'-phosphate + diphosphate = orotate + 5-phospho-alpha-D-ribose 1-diphosphate. The protein operates within pyrimidine metabolism; UMP biosynthesis via de novo pathway; UMP from orotate: step 1/2. In terms of biological role, catalyzes the transfer of a ribosyl phosphate group from 5-phosphoribose 1-diphosphate to orotate, leading to the formation of orotidine monophosphate (OMP). This chain is Orotate phosphoribosyltransferase, found in Bordetella pertussis (strain Tohama I / ATCC BAA-589 / NCTC 13251).